A 205-amino-acid chain; its full sequence is Beta-crystallin B2 (205 aa).

Ala-2 bears the N-acetylalanine mark. The tract at residues 2–16 is N-terminal arm; that stretch reads ASDHQTQAGKPQSLN. Beta/gamma crystallin 'Greek key' domains lie at 17–56 and 57–101; these read PKII…LVQA and GPWV…RPIK. The connecting peptide stretch occupies residues 102-106; the sequence is VDSQE. 2 Beta/gamma crystallin 'Greek key' domains span residues 107-148 and 149-191; these read HKII…RVQS and GTWV…RRIR. Residues 193–205 are C-terminal arm; sequence MQWHQRGAFHPSN.

Belongs to the beta/gamma-crystallin family. As to quaternary structure, homo/heterodimer, or complexes of higher-order. The structure of beta-crystallin oligomers seems to be stabilized through interactions between the N-terminal arms.

In terms of biological role, crystallins are the dominant structural components of the vertebrate eye lens. The sequence is that of Beta-crystallin B2 (CRYBB2) from Homo sapiens (Human).